A 206-amino-acid chain; its full sequence is Ribosome maturation factor RimP (206 aa).

It belongs to the RimP family.

It localises to the cytoplasm. Its function is as follows. Required for maturation of 30S ribosomal subunits. This Paracoccus denitrificans (strain Pd 1222) protein is Ribosome maturation factor RimP.